A 245-amino-acid chain; its full sequence is tRNA pseudouridine synthase A (245 aa).

Aspartate 52 functions as the Nucleophile in the catalytic mechanism. Residue tyrosine 111 participates in substrate binding.

The protein belongs to the tRNA pseudouridine synthase TruA family. In terms of assembly, homodimer.

It catalyses the reaction uridine(38/39/40) in tRNA = pseudouridine(38/39/40) in tRNA. Its function is as follows. Formation of pseudouridine at positions 38, 39 and 40 in the anticodon stem and loop of transfer RNAs. In Bradyrhizobium diazoefficiens (strain JCM 10833 / BCRC 13528 / IAM 13628 / NBRC 14792 / USDA 110), this protein is tRNA pseudouridine synthase A.